A 130-amino-acid polypeptide reads, in one-letter code: Small ribosomal subunit protein uS9 (130 aa).

The interval 102–130 (GFLTRDPRMKERKKYGLKKARRSPQFSKR) is disordered. Basic residues predominate over residues 111–130 (KERKKYGLKKARRSPQFSKR).

Belongs to the universal ribosomal protein uS9 family.

This Clostridium botulinum (strain ATCC 19397 / Type A) protein is Small ribosomal subunit protein uS9.